The chain runs to 308 residues: MTQAAPETLPLPPSSTEAIQRFCDALWLEDGLARNTLDAYRRDLTLYAQWLAGRGKALDQTEDVDLSDYFAARHEDSLASTANRRRTVFKRFFQWALREHLVSADPTRLLSTAKQPPRVPKTLSEAQVEALIAAPDVDAPLGLRDRAMIELMYASGLRVSEIVALKTVEVGLNEGVVRVIGGKGGKDRLVPFGAEAGDWLRRYLRDGRTALLGERTADALFVTARGDGMTRQAFWYLIKRYAQRADIHAPLSPHTLRHAFATHLLNHGADLRVVQMLLGHADISTTQIYTHVARERLRTLHAQHHPRG.

The Core-binding (CB) domain occupies 13–97; that stretch reads PSSTEAIQRF…VFKRFFQWAL (85 aa). In terms of domain architecture, Tyr recombinase spans 118–302; that stretch reads RVPKTLSEAQ…ARERLRTLHA (185 aa). Residues arginine 158, lysine 183, histidine 254, arginine 257, and histidine 280 contribute to the active site. Tyrosine 289 functions as the O-(3'-phospho-DNA)-tyrosine intermediate in the catalytic mechanism.

This sequence belongs to the 'phage' integrase family. XerD subfamily. As to quaternary structure, forms a cyclic heterotetrameric complex composed of two molecules of XerC and two molecules of XerD.

The protein resides in the cytoplasm. Site-specific tyrosine recombinase, which acts by catalyzing the cutting and rejoining of the recombining DNA molecules. The XerC-XerD complex is essential to convert dimers of the bacterial chromosome into monomers to permit their segregation at cell division. It also contributes to the segregational stability of plasmids. The sequence is that of Tyrosine recombinase XerD from Ralstonia nicotianae (strain ATCC BAA-1114 / GMI1000) (Ralstonia solanacearum).